Here is a 469-residue protein sequence, read N- to C-terminus: 3-isopropylmalate dehydratase large subunit (469 aa).

[4Fe-4S] cluster-binding residues include Cys-347, Cys-407, and Cys-410.

Belongs to the aconitase/IPM isomerase family. LeuC type 1 subfamily. As to quaternary structure, heterodimer of LeuC and LeuD. [4Fe-4S] cluster is required as a cofactor.

It catalyses the reaction (2R,3S)-3-isopropylmalate = (2S)-2-isopropylmalate. The protein operates within amino-acid biosynthesis; L-leucine biosynthesis; L-leucine from 3-methyl-2-oxobutanoate: step 2/4. Its function is as follows. Catalyzes the isomerization between 2-isopropylmalate and 3-isopropylmalate, via the formation of 2-isopropylmaleate. The polypeptide is 3-isopropylmalate dehydratase large subunit (Synechococcus sp. (strain RCC307)).